The chain runs to 482 residues: Glucose starvation modulator protein 1 (482 aa).

A DNA-binding region (zn(2)-C6 fungal-type) is located at residues 20-48; sequence CVFCHEKHLQCDVGRPCQNCEKRNIGESC. In terms of domain architecture, PAS spans 350-422; that stretch reads LLEYENMSKM…KLFNEYLAFS (73 aa).

Belongs to the ERT1/acuK family.

Its subcellular location is the nucleus. Functionally, transcription factor which regulates nonfermentable carbon utilization. This chain is Glucose starvation modulator protein 1 (GSM1), found in Eremothecium gossypii (strain ATCC 10895 / CBS 109.51 / FGSC 9923 / NRRL Y-1056) (Yeast).